Here is a 455-residue protein sequence, read N- to C-terminus: Exodeoxyribonuclease 7 large subunit (455 aa).

Belongs to the XseA family. In terms of assembly, heterooligomer composed of large and small subunits.

It is found in the cytoplasm. The enzyme catalyses Exonucleolytic cleavage in either 5'- to 3'- or 3'- to 5'-direction to yield nucleoside 5'-phosphates.. Bidirectionally degrades single-stranded DNA into large acid-insoluble oligonucleotides, which are then degraded further into small acid-soluble oligonucleotides. The sequence is that of Exodeoxyribonuclease 7 large subunit from Lactobacillus acidophilus (strain ATCC 700396 / NCK56 / N2 / NCFM).